A 170-amino-acid chain; its full sequence is UPF0220 protein C8D2.02c (170 aa).

Helical transmembrane passes span 23–43, 54–74, 101–121, and 136–156; these read LGVY…VDAA, LHIT…IVIV, ILFI…TVFI, and MGSA…ALWI.

It belongs to the UPF0220 family.

It localises to the membrane. The sequence is that of UPF0220 protein C8D2.02c from Schizosaccharomyces pombe (strain 972 / ATCC 24843) (Fission yeast).